The chain runs to 371 residues: 3-isopropylmalate dehydrogenase B (371 aa).

Residue 79–93 (GSKVDHIRRGLDGPE) participates in NAD(+) binding. Positions 100, 110, 142, and 229 each coordinate substrate. D229, D254, and D258 together coordinate Mg(2+). 296–308 (GSAPTIAGKNIAN) contacts NAD(+).

It belongs to the isocitrate and isopropylmalate dehydrogenases family. As to quaternary structure, homodimer. The cofactor is Mg(2+). Requires Mn(2+) as cofactor.

Its subcellular location is the cytoplasm. It catalyses the reaction (2R,3S)-3-isopropylmalate + NAD(+) = 4-methyl-2-oxopentanoate + CO2 + NADH. It functions in the pathway amino-acid biosynthesis; L-leucine biosynthesis; L-leucine from 3-methyl-2-oxobutanoate: step 3/4. Functionally, catalyzes the oxidation of 3-carboxy-2-hydroxy-4-methylpentanoate (3-isopropylmalate) to 3-carboxy-4-methyl-2-oxopentanoate. The product decarboxylates to 4-methyl-2 oxopentanoate. The sequence is that of 3-isopropylmalate dehydrogenase B (leu2B) from Aspergillus niger.